Reading from the N-terminus, the 74-residue chain is Exodeoxyribonuclease 7 small subunit (74 aa).

It belongs to the XseB family. As to quaternary structure, heterooligomer composed of large and small subunits.

The protein localises to the cytoplasm. It carries out the reaction Exonucleolytic cleavage in either 5'- to 3'- or 3'- to 5'-direction to yield nucleoside 5'-phosphates.. Its function is as follows. Bidirectionally degrades single-stranded DNA into large acid-insoluble oligonucleotides, which are then degraded further into small acid-soluble oligonucleotides. This Leuconostoc citreum (strain KM20) protein is Exodeoxyribonuclease 7 small subunit.